A 267-amino-acid polypeptide reads, in one-letter code: Tryptophan synthase alpha chain (267 aa).

Catalysis depends on proton acceptor residues glutamate 49 and aspartate 60.

Belongs to the TrpA family. As to quaternary structure, tetramer of two alpha and two beta chains.

It carries out the reaction (1S,2R)-1-C-(indol-3-yl)glycerol 3-phosphate + L-serine = D-glyceraldehyde 3-phosphate + L-tryptophan + H2O. The protein operates within amino-acid biosynthesis; L-tryptophan biosynthesis; L-tryptophan from chorismate: step 5/5. In terms of biological role, the alpha subunit is responsible for the aldol cleavage of indoleglycerol phosphate to indole and glyceraldehyde 3-phosphate. The protein is Tryptophan synthase alpha chain of Acinetobacter baylyi (strain ATCC 33305 / BD413 / ADP1).